Here is a 227-residue protein sequence, read N- to C-terminus: PKHD-type hydroxylase Bxeno_B2194 (227 aa).

Positions 78 to 178 constitute a Fe2OG dioxygenase domain; it reads KVFPPLFNRY…RVASFFWIQS (101 aa). Residues H96, D98, and H159 each contribute to the Fe cation site. R169 contacts 2-oxoglutarate.

Fe(2+) serves as cofactor. The cofactor is L-ascorbate.

In Paraburkholderia xenovorans (strain LB400), this protein is PKHD-type hydroxylase Bxeno_B2194.